The sequence spans 307 residues: UPF0276 protein HI_1600 (307 aa).

This sequence belongs to the UPF0276 family.

This is UPF0276 protein HI_1600 from Haemophilus influenzae (strain ATCC 51907 / DSM 11121 / KW20 / Rd).